The following is a 253-amino-acid chain: Malonyl-[acyl-carrier protein] O-methyltransferase (253 aa).

It belongs to the methyltransferase superfamily.

The catalysed reaction is malonyl-[ACP] + S-adenosyl-L-methionine = malonyl-[ACP] methyl ester + S-adenosyl-L-homocysteine. It functions in the pathway cofactor biosynthesis; biotin biosynthesis. Converts the free carboxyl group of a malonyl-thioester to its methyl ester by transfer of a methyl group from S-adenosyl-L-methionine (SAM). It allows to synthesize pimeloyl-ACP via the fatty acid synthetic pathway. The sequence is that of Malonyl-[acyl-carrier protein] O-methyltransferase from Pectobacterium atrosepticum (strain SCRI 1043 / ATCC BAA-672) (Erwinia carotovora subsp. atroseptica).